The following is a 450-amino-acid chain: Divalent metal cation transporter MntH (450 aa).

11 helical membrane passes run 34 to 54 (LSFL…GNWI), 61 to 81 (AQYG…AMLL), 108 to 128 (IAII…IAEV), 141 to 161 (IPLI…LFIM), 170 to 190 (AIVG…VYIS), 212 to 232 (GILY…NLYL), 263 to 283 (IQLS…ASLF), 305 to 325 (PVLG…ALLA), 361 to 381 (SLAV…AAKI), 383 to 403 (QLLV…LIPL), and 422 to 442 (VNII…YLIV).

Belongs to the NRAMP family.

It localises to the cell membrane. H(+)-stimulated, divalent metal cation uptake system. This Staphylococcus aureus (strain JH1) protein is Divalent metal cation transporter MntH.